The chain runs to 356 residues: Alpha-N-acetylneuraminide alpha-2,8-sialyltransferase (356 aa).

Residues 1 to 29 (MSPCGRARRHTSRGAMAVLAWKFPRTRLP) are Cytoplasmic-facing. Residues 30 to 48 (VGASALCVVVLCWLYVFPV) traverse the membrane as a helical; Signal-anchor for type II membrane protein segment. The Lumenal segment spans residues 49 to 356 (YRLPDEKEIV…CEDNSLQPTS (308 aa)). 2 N-linked (GlcNAc...) asparagine glycosylation sites follow: asparagine 71 and asparagine 119. Residues cysteine 138 and cysteine 287 are joined by a disulfide bond. Residues asparagine 143 and asparagine 166 each contribute to the CMP-N-acetyl-beta-neuraminate site. N-linked (GlcNAc...) asparagine glycosylation is found at asparagine 214 and asparagine 245. Serine 274, threonine 275, glycine 276, tryptophan 296, and histidine 310 together coordinate CMP-N-acetyl-beta-neuraminate.

This sequence belongs to the glycosyltransferase 29 family.

It is found in the golgi apparatus membrane. The catalysed reaction is an N-acetyl-alpha-neuraminyl-(2-&gt;3)-beta-D-galactosyl derivative + CMP-N-acetyl-beta-neuraminate = an N-acetyl-alpha-neuraminyl-(2-&gt;8)-N-acetyl-alpha-neuraminyl-(2-&gt;3)-beta-D-galactosyl derivative + CMP + H(+). It catalyses the reaction a ganglioside GM3 (d18:1(4E)) + CMP-N-acetyl-beta-neuraminate = a ganglioside GD3 (d18:1(4E)) + CMP + H(+). The enzyme catalyses a ganglioside GD3 (d18:1(4E)) + CMP-N-acetyl-beta-neuraminate = a ganglioside GT3 (d18:1(4E)) + CMP + H(+). It carries out the reaction a ganglioside GD1a (d18:1(4E)) + CMP-N-acetyl-beta-neuraminate = a ganglioside GT1a (d18:1(4E)) + CMP + H(+). The catalysed reaction is a ganglioside GT1b (d18:1(4E)) + CMP-N-acetyl-beta-neuraminate = a ganglioside GQ1b (d18:1(4E)) + CMP + H(+). It catalyses the reaction a ganglioside GM1b (d18:1(4E)) + CMP-N-acetyl-beta-neuraminate = a ganglioside GD1c (d18:1(4E)) + CMP + H(+). The enzyme catalyses a ganglioside GD3 + CMP-N-acetyl-beta-neuraminate = a ganglioside GT3 + CMP + H(+). It carries out the reaction [alpha-N-acetylneuraminyl-(2-&gt;8)](n)-alpha-N-acetylneuraminyl-(2-&gt;8)-alpha-N-acetylneuraminyl-(2-&gt;3)-beta-D-galactosyl-(1-&gt;4)-beta-D-glucosyl-(1&lt;-&gt;1)-ceramide + CMP-N-acetyl-beta-neuraminate = [alpha-N-acetylneuraminyl-(2-&gt;8)](n+1)-alpha-N-acetylneuraminyl-(2-&gt;8)-alpha-N-acetylneuraminyl-(2-&gt;3)-beta-D-galactosyl-(1-&gt;4)-beta-D-glucosyl-(1&lt;-&gt;1)-ceramide + CMP + H(+). The protein operates within protein modification; protein glycosylation. It functions in the pathway lipid metabolism; sphingolipid metabolism. Its function is as follows. Catalyzes the addition of sialic acid in alpha 2,8-linkage to the sialic acid moiety of the ganglioside GM3 to form ganglioside GD3; gangliosides are a subfamily of complex glycosphingolipds that contain one or more residues of sialic acid. Can catalyze the addition of a second alpha-2,8- sialic acid to GD3 to form GT3. Can use GM1b, GD1a and GT1b as acceptor substrates to synthesize GD1c, GT1a and GQ1b respectively. This Bos taurus (Bovine) protein is Alpha-N-acetylneuraminide alpha-2,8-sialyltransferase.